Consider the following 439-residue polypeptide: uncharacterized protein (439 aa).

2 CBS domains span residues 195-254 (LTPA…SIEK) and 256-314 (MTKN…KQPQ).

This is an uncharacterized protein from Bacillus subtilis (strain 168).